Here is a 693-residue protein sequence, read N- to C-terminus: UvrABC system protein C (693 aa).

Positions 16–95 (DAPGVYRFRD…IKEFDPRFNV (80 aa)) constitute a GIY-YIG domain. The 36-residue stretch at 208–243 (GVFLRRLESEMAAASAELDFERAARVRDDINALRRV) folds into the UVR domain. The interval 656–693 (APSPDDATTEPGAVGEPGTADGAAADPDGRDAVVVPEG) is disordered. Low complexity predominate over residues 672 to 693 (PGTADGAAADPDGRDAVVVPEG).

Belongs to the UvrC family. In terms of assembly, interacts with UvrB in an incision complex.

It localises to the cytoplasm. Its function is as follows. The UvrABC repair system catalyzes the recognition and processing of DNA lesions. UvrC both incises the 5' and 3' sides of the lesion. The N-terminal half is responsible for the 3' incision and the C-terminal half is responsible for the 5' incision. The protein is UvrABC system protein C of Beutenbergia cavernae (strain ATCC BAA-8 / DSM 12333 / CCUG 43141 / JCM 11478 / NBRC 16432 / NCIMB 13614 / HKI 0122).